A 184-amino-acid chain; its full sequence is C-phycoerythrin class 1 subunit beta (184 aa).

Residues C50 and C61 each coordinate (2R,3E)-phycoerythrobilin. Residue N72 is modified to N4-methylasparagine. (2R,3E)-phycoerythrobilin is bound by residues C82 and C165.

Belongs to the phycobiliprotein family. As to quaternary structure, heterodimer of an alpha and a beta chain. In terms of processing, contains three covalently linked phycoerythrobilin chromophores.

Its subcellular location is the cellular thylakoid membrane. Functionally, light-harvesting photosynthetic bile pigment-protein from the phycobiliprotein complex. The protein is C-phycoerythrin class 1 subunit beta (cpeB) of Synechococcus sp. (strain WH8020).